A 431-amino-acid polypeptide reads, in one-letter code: Na(+)-translocating NADH-quinone reductase subunit F (431 aa).

The chain crosses the membrane as a helical span at residues 10-30; it reads ISIASLVFCVIGLILSGVILI. One can recognise a 2Fe-2S ferredoxin-type domain in the interval 41 to 133; sequence CKLKINNDDS…DMNLEIEERY (93 aa). Residues C76, C82, C85, and C117 each coordinate [2Fe-2S] cluster. The FAD-binding FR-type domain maps to 136–286; that stretch reads ASSWEGTVVS…SGPYGESFMK (151 aa).

It belongs to the NqrF family. As to quaternary structure, composed of six subunits; NqrA, NqrB, NqrC, NqrD, NqrE and NqrF. The cofactor is [2Fe-2S] cluster. Requires FAD as cofactor.

The protein resides in the cell inner membrane. It carries out the reaction a ubiquinone + n Na(+)(in) + NADH + H(+) = a ubiquinol + n Na(+)(out) + NAD(+). Its function is as follows. NQR complex catalyzes the reduction of ubiquinone-1 to ubiquinol by two successive reactions, coupled with the transport of Na(+) ions from the cytoplasm to the periplasm. The first step is catalyzed by NqrF, which accepts electrons from NADH and reduces ubiquinone-1 to ubisemiquinone by a one-electron transfer pathway. The polypeptide is Na(+)-translocating NADH-quinone reductase subunit F (Chlamydia felis (strain Fe/C-56) (Chlamydophila felis)).